Reading from the N-terminus, the 317-residue chain is 17-beta-hydroxysteroid dehydrogenase type 6 (317 aa).

Positions 1 to 17 (MWFYLVTLVGLYHLLRW) are cleaved as a signal peptide. Residue 33-57 (FITGCDSGFGNLLARQLDRRGMRVL) coordinates NAD(+). N-linked (GlcNAc...) asparagine glycosylation is found at Asn71 and Asn161. Ser164 provides a ligand contact to substrate. Tyr176 acts as the Proton acceptor in catalysis.

This sequence belongs to the short-chain dehydrogenases/reductases (SDR) family. As to expression, detected in liver.

It is found in the microsome membrane. The protein resides in the early endosome membrane. The catalysed reaction is all-trans-retinol--[retinol-binding protein] + NAD(+) = all-trans-retinal--[retinol-binding protein] + NADH + H(+). It catalyses the reaction all-trans-retinol + NAD(+) = all-trans-retinal + NADH + H(+). The enzyme catalyses androsterone + NAD(+) = 5alpha-androstan-3,17-dione + NADH + H(+). It carries out the reaction testosterone + NAD(+) = androst-4-ene-3,17-dione + NADH + H(+). The catalysed reaction is 5alpha-androstane-3alpha,17beta-diol + NAD(+) = 17beta-hydroxy-5alpha-androstan-3-one + NADH + H(+). It catalyses the reaction 17beta-estradiol + NAD(+) = estrone + NADH + H(+). The enzyme catalyses 17beta-estradiol + NADP(+) = estrone + NADPH + H(+). It carries out the reaction 3alpha-hydroxy-5alpha-pregnan-20-one + NAD(+) = 5alpha-pregnane-3,20-dione + NADH + H(+). The catalysed reaction is 5alpha-androstane-3beta,17beta-diol + NAD(+) = 17beta-hydroxy-5alpha-androstan-3-one + NADH + H(+). It catalyses the reaction 3beta-hydroxy-5alpha-androstan-17-one + NAD(+) = 5alpha-androstan-3,17-dione + NADH + H(+). Inhibited by carbenoxolone and phenyl arsenoxide. NAD-dependent oxidoreductase with broad substrate specificity that shows both oxidative and reductive activity (in vitro). Has 17-beta-hydroxysteroid dehydrogenase activity towards various steroids (in vitro). Converts 5-alpha-androstan-3-alpha,17-beta-diol to androsterone and estradiol to estrone (in vitro). Has 3-alpha-hydroxysteroid dehydrogenase activity towards androsterone (in vitro). Has retinol dehydrogenase activity towards all-trans-retinol (in vitro). The polypeptide is 17-beta-hydroxysteroid dehydrogenase type 6 (Hsd17b6) (Mus musculus (Mouse)).